The sequence spans 194 residues: dTTP/UTP pyrophosphatase (194 aa).

Aspartate 66 serves as the catalytic Proton acceptor.

It belongs to the Maf family. YhdE subfamily. The cofactor is a divalent metal cation.

It is found in the cytoplasm. The catalysed reaction is dTTP + H2O = dTMP + diphosphate + H(+). It catalyses the reaction UTP + H2O = UMP + diphosphate + H(+). In terms of biological role, nucleoside triphosphate pyrophosphatase that hydrolyzes dTTP and UTP. May have a dual role in cell division arrest and in preventing the incorporation of modified nucleotides into cellular nucleic acids. The chain is dTTP/UTP pyrophosphatase from Anaeromyxobacter dehalogenans (strain 2CP-C).